A 95-amino-acid chain; its full sequence is Signal recognition particle 19 kDa protein (95 aa).

It belongs to the SRP19 family. In terms of assembly, part of the signal recognition particle protein translocation system, which is composed of SRP and FtsY. Archaeal SRP consists of a 7S RNA molecule of 300 nucleotides and two protein subunits: SRP54 and SRP19.

It localises to the cytoplasm. In terms of biological role, involved in targeting and insertion of nascent membrane proteins into the cytoplasmic membrane. Binds directly to 7S RNA and mediates binding of the 54 kDa subunit of the SRP. This is Signal recognition particle 19 kDa protein from Staphylothermus marinus (strain ATCC 43588 / DSM 3639 / JCM 9404 / F1).